The primary structure comprises 444 residues: Guanosine nucleotide diphosphate dissociation inhibitor 2 (444 aa).

The protein belongs to the Rab GDI family. Expressed in roots and floral buds.

In terms of biological role, regulates the GDP/GTP exchange reaction of most RAB proteins by inhibiting the dissociation of GDP from them, and the subsequent binding of GTP. In Arabidopsis thaliana (Mouse-ear cress), this protein is Guanosine nucleotide diphosphate dissociation inhibitor 2 (GDI2).